A 197-amino-acid polypeptide reads, in one-letter code: GTP cyclohydrolase 1 (197 aa).

Residues Cys88, His91, and Cys160 each coordinate Zn(2+).

This sequence belongs to the GTP cyclohydrolase I family. In terms of assembly, homomer.

It catalyses the reaction GTP + H2O = 7,8-dihydroneopterin 3'-triphosphate + formate + H(+). Its pathway is cofactor biosynthesis; 7,8-dihydroneopterin triphosphate biosynthesis; 7,8-dihydroneopterin triphosphate from GTP: step 1/1. The protein is GTP cyclohydrolase 1 of Clostridium beijerinckii (strain ATCC 51743 / NCIMB 8052) (Clostridium acetobutylicum).